Consider the following 39-residue polypeptide: Photosystem II reaction center protein J (39 aa).

A helical membrane pass occupies residues 7-27; it reads IPLWVVAVIAGLGVIAVVGLF.

Belongs to the PsbJ family. As to quaternary structure, PSII is composed of 1 copy each of membrane proteins PsbA, PsbB, PsbC, PsbD, PsbE, PsbF, PsbH, PsbI, PsbJ, PsbK, PsbL, PsbM, PsbT, PsbX, PsbY, PsbZ, Psb30/Ycf12, peripheral proteins PsbO, CyanoQ (PsbQ), PsbU, PsbV and a large number of cofactors. It forms dimeric complexes.

It localises to the cellular thylakoid membrane. Its function is as follows. One of the components of the core complex of photosystem II (PSII). PSII is a light-driven water:plastoquinone oxidoreductase that uses light energy to abstract electrons from H(2)O, generating O(2) and a proton gradient subsequently used for ATP formation. It consists of a core antenna complex that captures photons, and an electron transfer chain that converts photonic excitation into a charge separation. This is Photosystem II reaction center protein J from Gloeothece citriformis (strain PCC 7424) (Cyanothece sp. (strain PCC 7424)).